The sequence spans 317 residues: Tyrosine--tRNA ligase (317 aa).

Y33 is a binding site for L-tyrosine. Positions 38–46 (PSGKIHMGH) match the 'HIGH' region motif. L-tyrosine contacts are provided by Y155, Q159, D162, and Q177. The short motif at 211–215 (KMSSS) is the 'KMSKS' region element. An ATP-binding site is contributed by S214.

This sequence belongs to the class-I aminoacyl-tRNA synthetase family. TyrS type 3 subfamily. Homodimer.

It localises to the cytoplasm. It carries out the reaction tRNA(Tyr) + L-tyrosine + ATP = L-tyrosyl-tRNA(Tyr) + AMP + diphosphate + H(+). Its function is as follows. Catalyzes the attachment of tyrosine to tRNA(Tyr) in a two-step reaction: tyrosine is first activated by ATP to form Tyr-AMP and then transferred to the acceptor end of tRNA(Tyr). This Methanococcoides burtonii (strain DSM 6242 / NBRC 107633 / OCM 468 / ACE-M) protein is Tyrosine--tRNA ligase.